The sequence spans 336 residues: Fructose-1,6-bisphosphatase class 1 (336 aa).

Mg(2+) is bound by residues Glu-90, Asp-112, Leu-114, and Asp-115. Substrate is bound by residues 115–118 (DGSS), Asn-211, and Lys-277. Residue Glu-283 coordinates Mg(2+).

It belongs to the FBPase class 1 family. As to quaternary structure, homotetramer. Requires Mg(2+) as cofactor.

Its subcellular location is the cytoplasm. The catalysed reaction is beta-D-fructose 1,6-bisphosphate + H2O = beta-D-fructose 6-phosphate + phosphate. It functions in the pathway carbohydrate biosynthesis; gluconeogenesis. This is Fructose-1,6-bisphosphatase class 1 from Pseudomonas fluorescens (strain SBW25).